The primary structure comprises 116 residues: Ribulose bisphosphate carboxylase small subunit 1 (116 aa).

Belongs to the RuBisCO small chain family. In terms of assembly, heterohexadecamer of 8 large and 8 small subunits.

It localises to the cytoplasm. RuBisCO catalyzes two reactions: the carboxylation of D-ribulose 1,5-bisphosphate, the primary event in carbon dioxide fixation, as well as the oxidative fragmentation of the pentose substrate. Both reactions occur simultaneously and in competition at the same active site. Although the small subunit is not catalytic it is essential for maximal activity. Functionally, can replace the endogenous type I ccbS gene in H.neapolitanus, reconstituting RuBisCO with about 10% of normal activity; the active enzyme is targeted to carboxysomes. The protein is Ribulose bisphosphate carboxylase small subunit 1 of Hydrogenovibrio crunogenus (strain DSM 25203 / XCL-2) (Thiomicrospira crunogena).